A 202-amino-acid chain; its full sequence is LexA repressor (202 aa).

Residues 28–48 constitute a DNA-binding region (H-T-H motif); sequence RAEIAQELGFKSPNAAEEHLK. Residues Ser-123 and Lys-160 each act as for autocatalytic cleavage activity in the active site.

It belongs to the peptidase S24 family. Homodimer.

The catalysed reaction is Hydrolysis of Ala-|-Gly bond in repressor LexA.. Represses a number of genes involved in the response to DNA damage (SOS response), including recA and lexA. In the presence of single-stranded DNA, RecA interacts with LexA causing an autocatalytic cleavage which disrupts the DNA-binding part of LexA, leading to derepression of the SOS regulon and eventually DNA repair. This is LexA repressor from Pseudomonas putida (Arthrobacter siderocapsulatus).